The following is a 48-amino-acid chain: ATP synthase protein 8 (48 aa).

Residues 12–32 (LLTGGILAISLLLYFVATYLL) traverse the membrane as a helical segment.

It belongs to the ATPase protein 8 family. F-type ATPases have 2 components, CF(1) - the catalytic core - and CF(0) - the membrane proton channel.

It localises to the mitochondrion membrane. Its function is as follows. Mitochondrial membrane ATP synthase (F(1)F(0) ATP synthase or Complex V) produces ATP from ADP in the presence of a proton gradient across the membrane which is generated by electron transport complexes of the respiratory chain. F-type ATPases consist of two structural domains, F(1) - containing the extramembraneous catalytic core and F(0) - containing the membrane proton channel, linked together by a central stalk and a peripheral stalk. During catalysis, ATP synthesis in the catalytic domain of F(1) is coupled via a rotary mechanism of the central stalk subunits to proton translocation. Part of the complex F(0) domain. Minor subunit located with subunit a in the membrane. The chain is ATP synthase protein 8 (ATP8) from Candida parapsilosis (Yeast).